The chain runs to 109 residues: Nucleoid-associated protein Sbal223_1770 (109 aa).

This sequence belongs to the YbaB/EbfC family. In terms of assembly, homodimer.

Its subcellular location is the cytoplasm. It localises to the nucleoid. In terms of biological role, binds to DNA and alters its conformation. May be involved in regulation of gene expression, nucleoid organization and DNA protection. The polypeptide is Nucleoid-associated protein Sbal223_1770 (Shewanella baltica (strain OS223)).